A 445-amino-acid polypeptide reads, in one-letter code: Allantoinase (445 aa).

Positions 63, 65, 150, 186, 238, and 311 each coordinate Zn(2+). An N6-carboxylysine modification is found at Lys150.

This sequence belongs to the metallo-dependent hydrolases superfamily. Allantoinase family. As to quaternary structure, homotetramer. It depends on Zn(2+) as a cofactor. Post-translationally, carboxylation allows a single lysine to coordinate two zinc ions.

The enzyme catalyses (S)-allantoin + H2O = allantoate + H(+). Its pathway is nitrogen metabolism; (S)-allantoin degradation; allantoate from (S)-allantoin: step 1/1. Functionally, catalyzes the conversion of allantoin (5-ureidohydantoin) to allantoic acid by hydrolytic cleavage of the five-member hydantoin ring. This Streptomyces avermitilis (strain ATCC 31267 / DSM 46492 / JCM 5070 / NBRC 14893 / NCIMB 12804 / NRRL 8165 / MA-4680) protein is Allantoinase.